We begin with the raw amino-acid sequence, 292 residues long: Inositol oxygenase (292 aa).

Residues R33 and 88 to 90 (DES) each bind substrate. Residues H101, H128, and D129 each contribute to the Fe cation site. Substrate contacts are provided by residues K132 and 149-150 (GD). 3 residues coordinate Fe cation: H201, H227, and D260. Residue 227-228 (HS) participates in substrate binding.

This sequence belongs to the myo-inositol oxygenase family. Requires Fe cation as cofactor.

Its subcellular location is the cytoplasm. The enzyme catalyses myo-inositol + O2 = D-glucuronate + H2O + H(+). It participates in polyol metabolism; myo-inositol degradation into D-glucuronate; D-glucuronate from myo-inositol: step 1/1. This chain is Inositol oxygenase (miox), found in Dictyostelium discoideum (Social amoeba).